The sequence spans 468 residues: Chitoporin (468 aa).

The first 32 residues, 1 to 32, serve as a signal peptide directing secretion; the sequence is MRTFSGKRSTLALAIAGVTAMSGFMAMPEARA.

Belongs to the outer membrane porin (Opr) (TC 1.B.25) family.

It localises to the cell outer membrane. Involved in the uptake of chitosugars. The chain is Chitoporin (chiP) from Escherichia coli (strain K12).